The chain runs to 255 residues: Ly6/PLAUR domain-containing protein 8 (255 aa).

The N-terminal stretch at 1-20 is a signal peptide; the sequence is MRGVFIAGVIAAFAITVVDS. Residues Asn22, Asn30, Asn53, Asn72, Asn76, Asn105, Asn115, Asn128, Asn154, Asn169, Asn179, Asn200, and Asn210 are each glycosylated (N-linked (GlcNAc...) asparagine). Residues 121–170 form the UPAR/Ly6 domain; it reads CMSCYGHNKTLCEEKPQKCYEGEQCVFIIAEMVNGSGRVELKGCSDISNS. Ser233 carries GPI-anchor amidated serine lipidation. Positions 234 to 255 are cleaved as a propeptide — removed in mature form; it reads MGTKASFTSSIFGSLLLLKLLF.

The protein belongs to the CNF-like-inhibitor family. Post-translationally, highly N-glycosylated. Not O-glycosylated. GPI-anchored. The GPI-anchor is cleaved, leading to secretion into the colonic lumen. In terms of tissue distribution, specifically present in enterocytes located at the uppermost epithelial layer of the colon (at protein level). Exclusively expressed in the large intestine: specifically expressed on the apical surface of epithelial cells located at the uppermost layer of the colonic gland.

Its subcellular location is the cell membrane. It localises to the secreted. In terms of biological role, secreted protein specifically required to prevent invasion of Gram-negative bacteria in the inner mucus layer of the colon epithelium, a portion of the large intestine which is free of commensal microbiota. Prevents invasion of flagellated microbiota by binding to the flagellum of bacteria, such as P.mirabilis, thereby inhibiting bacterial motility in the intestinal lumen. Segregation of intestinal bacteria and epithelial cells in the colon is required to preserve intestinal homeostasis. The polypeptide is Ly6/PLAUR domain-containing protein 8 (Mus musculus (Mouse)).